Reading from the N-terminus, the 331-residue chain is Nucleotide sugar transporter SLC35B4 (331 aa).

11 helical membrane-spanning segments follow: residues 4-24 (ALAV…LELL), 30-50 (GCGN…GFLF), 59-79 (PAIP…VSVV), 92-112 (LHMI…IIIL), 117-137 (SIFK…CTFM), 153-173 (GFQA…ALLM), 201-221 (ALPL…AVLF), 229-249 (IPGI…NIIT), 251-267 (YVCI…CASL), 268-288 (TVTL…ILYF), and 291-311 (PFTL…LMYT). Residues 326 to 331 (KDNKKN) carry the Mediates endoplasmic reticulum retention motif.

The protein belongs to the nucleotide-sugar transporter family. SLC35B subfamily.

The protein localises to the endoplasmic reticulum membrane. It catalyses the reaction UDP-N-acetyl-alpha-D-glucosamine(in) + UDP-alpha-D-glucuronate(out) = UDP-N-acetyl-alpha-D-glucosamine(out) + UDP-alpha-D-glucuronate(in). It carries out the reaction UDP-alpha-D-xylose(in) + UDP-alpha-D-glucuronate(out) = UDP-alpha-D-xylose(out) + UDP-alpha-D-glucuronate(in). Functionally, antiporter that transports nucleotide sugars across the endoplasmic reticulum (ER) membrane in exchange for another nucleotide sugar. May couple UDP-alpha-D-glucuronate (UDP-GlcA) or UDP-alpha-D-xylose (UDP-Xyl) efflux to UDP-alpha-D-glucuronate (UDP-GlcA) influx into the ER lumen, which in turn stimulates glucuronidation and excretion of endobiotics and xenobiotics. The chain is Nucleotide sugar transporter SLC35B4 (SLC35B4) from Macaca fascicularis (Crab-eating macaque).